Consider the following 488-residue polypeptide: Sucrose 6(F)-phosphate phosphorylase (488 aa).

Sucrose 6(F)-phosphate is bound by residues Asp49, His87, 195–197 (RLD), Glu238, 295–296 (HD), 342–345 (DVHQ), and Arg399. Asp197 acts as the Nucleophile in catalysis. Glu238 serves as the catalytic Proton donor/acceptor.

The protein belongs to the glycosyl hydrolase 13 family. Sucrose phosphorylase subfamily. In terms of assembly, monomer.

The catalysed reaction is sucrose 6(F)-phosphate + phosphate = beta-D-fructose 6-phosphate + alpha-D-glucose 1-phosphate. Functionally, catalyzes the reversible phosphorolysis of sucrose 6(F)-phosphate into alpha-D-glucose 1-phosphate (Glc1P) and D-fructose 6-phosphate. May be involved in a new pathway for the degradation of sucrose, which could become phosphorylated on its fructose moiety during uptake via a PTS system. To a lesser extent, can also reversibly act on sucrose in vitro. Is also able to catalyze transglycosylation reactions in vitro. The sequence is that of Sucrose 6(F)-phosphate phosphorylase from Thermoanaerobacterium thermosaccharolyticum (strain ATCC 7956 / DSM 571 / NCIMB 9385 / NCA 3814 / NCTC 13789 / WDCM 00135 / 2032) (Clostridium thermosaccharolyticum).